The primary structure comprises 580 residues: MTDPAGPRGSETERLLTPNPGYGTQVGPSPAPPTPPEEEDLRRRLKYFFMSPCDKFRAKGRKPCKLMLQVVKILVVTVQLILFGLSNQLAVTFREENTIAFRHLFLLGYSDGADDTFAAYTQEQLYQAIFHAVDQYLALPDVSLGRYAYVHGGGDPWTNGSGLALCQRYYHRGHVDPANDTFDIDPMVVTDCIQVDPPERPPPSPSDDLALLEGSSSYKNLTLKFHKLVNVTIHFRLKTINLQSLINNEIPDCYTFSVLITFDNKAHSGRIPISLETQAHIQECKHPSVFRHGDNSFRLLFDVVVILTCSLSFLLCARSLLRGFLLQNEFVRFMWRQRRRVISLWERLEFVNGWYILLVTSDVLTISGTIMKIGIEAKNLASYDVCSILLGTSTLLVWVGVIRYLTFFHNYNILIATLRVALPSVMRFCCCVAVIYLGYCFCGWIVLGPYHVKFRSLSMVSECLFSLINGDDMFVTFAAMQAQQGRSSLVWLFSQLYLYSFISLFIYMVLSLFIALITGAYDTIKHPGGAGAEESELQAYIAQCQDSPTSGKFRRGSGSACSLLCCCGRDPSEEHSLLVN.

Residues 1-38 (MTDPAGPRGSETERLLTPNPGYGTQVGPSPAPPTPPEE) are disordered. At 1 to 65 (MTDPAGPRGS…FRAKGRKPCK (65 aa)) the chain is on the cytoplasmic side. Serine 10 bears the Phosphoserine mark. The Dileucine motif; mediates targeting to lysosomes motif lies at 11 to 16 (ETERLL). Residues 42–62 (RRRLKYFFMSPCDKFRAKGRK) form an interaction with phosphoinositides region. Residues 66-86 (LMLQVVKILVVTVQLILFGLS) form a helical membrane-spanning segment. Residues 87-298 (NQLAVTFREE…VFRHGDNSFR (212 aa)) lie on the Extracellular side of the membrane. An extracellular/lumenal pore loop region spans residues 107 to 121 (LGYSDGADDTFAAYT). Cysteines 166 and 192 form a disulfide. A glycan (N-linked (GlcNAc...) asparagine) is linked at asparagine 230. A disulfide bridge links cysteine 253 with cysteine 284. Residues 299–321 (LLFDVVVILTCSLSFLLCARSLL) traverse the membrane as a helical segment. The Cytoplasmic segment spans residues 322–350 (RGFLLQNEFVRFMWRQRRRVISLWERLEF). The chain crosses the membrane as a helical span at residues 351–371 (VNGWYILLVTSDVLTISGTIM). At 372–382 (KIGIEAKNLAS) the chain is on the extracellular side. A helical membrane pass occupies residues 383 to 405 (YDVCSILLGTSTLLVWVGVIRYL). At 406–427 (TFFHNYNILIATLRVALPSVMR) the chain is on the cytoplasmic side. Residues 428–448 (FCCCVAVIYLGYCFCGWIVLG) form a helical membrane-spanning segment. Residues 449–456 (PYHVKFRS) lie on the Extracellular side of the membrane. Residues 457–477 (LSMVSECLFSLINGDDMFVTF) constitute an intramembrane region (pore-forming). A Selectivity filter motif is present at residues 469 to 474 (NGDDMF). At 478-491 (AAMQAQQGRSSLVW) the chain is on the extracellular side. The chain crosses the membrane as a helical span at residues 492–513 (LFSQLYLYSFISLFIYMVLSLF). Residues 514–580 (IALITGAYDT…PSEEHSLLVN (67 aa)) lie on the Cytoplasmic side of the membrane. A phosphoserine; by PAK mark is found at serine 557 and serine 559. The required for palmitoylation and association with membranes stretch occupies residues 565-567 (CCC). The Dileucine internalization motif; mediates AP2 complex-dependent internalization motif lies at 573–578 (EEHSLL).

The protein belongs to the transient receptor (TC 1.A.4) family. Polycystin subfamily. MCOLN1 sub-subfamily. In terms of assembly, homotetramer. Homooligomer. Can heterooligomerize with MCOLN2 or MCOLN3; heteromeric assemblies have different channel properties as compared to the respective homooligomers and may be tissue-specific. Interacts with PDCD6. Interacts with TMEM163. Interacts with LAPTM4B. Post-translationally, palmitoylated; involved in association with membranes. Phosphorylation by PKA inhibits channel activity. Dephosphorylation increases activity. In terms of processing, proteolytically cleaved probably involving multiple lysosomal proteases including cathepsin B; inhibits lysosomal channel activity.

The protein resides in the late endosome membrane. It localises to the lysosome membrane. The protein localises to the cytoplasmic vesicle membrane. It is found in the cell projection. Its subcellular location is the phagocytic cup. The protein resides in the cytoplasmic vesicle. It localises to the phagosome membrane. The protein localises to the cell membrane. It catalyses the reaction Ca(2+)(in) = Ca(2+)(out). It carries out the reaction Fe(2+)(in) = Fe(2+)(out). The enzyme catalyses Mg(2+)(in) = Mg(2+)(out). The catalysed reaction is K(+)(in) = K(+)(out). It catalyses the reaction Na(+)(in) = Na(+)(out). Channel activity is controlled by multiple regulatory mechanisms in different subcellular compartments. Channel function is transiently modulated by changes in Ca(2+) in a pH-dependent manner; pH changes modify the aggregation state of unitary channels; a negative cooperativity between extracellular/lumenal Ca(2+) and H(+) is suggested. Regulated by phosphoinositides in a compartment-specific manner: in lysosomes activated by PtdIns(3,5)P2 (Phosphatidylinositol 3,5-bisphosphate) and at the plasma membrane inhibited by PtdIns(4,5)P2 (Phosphatidylinositol 4,5-bisphosphate). Functionally, nonselective cation channel probably playing a role in the regulation of membrane trafficking events and of metal homeostasis. Acts as a Ca(2+)-permeable cation channel with inwardly rectifying activity. Proposed to play a major role in Ca(2+) release from late endosome and lysosome vesicles to the cytoplasm, which is important for many lysosome-dependent cellular events, including the fusion and trafficking of these organelles, exocytosis and autophagy. Required for efficient uptake of large particles in macrophages in which Ca(2+) release from the lysosomes triggers lysosomal exocytosis. May also play a role in phagosome-lysosome fusion. Involved in lactosylceramide trafficking indicative for a role in the regulation of late endocytic membrane fusion/fission events. By mediating lysosomal Ca(2+) release is involved in regulation of mTORC1 signaling and in mTOR/TFEB-dependent lysosomal adaptation to environmental cues such as nutrient levels. Seems to act as lysosomal active oxygen species (ROS) sensor involved in ROS-induced TFEB activation and autophagy. Also functions as a Fe(2+) permeable channel in late endosomes and lysosomes. Also permeable to Mg(2+), Na(+). K(+) and Cs(+). Proposed to play a role in zinc homeostasis probably implicating its association with TMEM163. In adaptive immunity, TRPML2 and TRPML1 may play redundant roles in the function of the specialized lysosomes of B cells. May contribute to cellular lipase activity within the late endosomal pathway or at the cell surface which may be involved in processes of membrane reshaping and vesiculation, especially the growth of tubular structures. However, it is not known, whether it conveys the enzymatic activity directly, or merely facilitates the activity of an associated phospholipase. The polypeptide is Mucolipin-1 (MCOLN1) (Macaca fascicularis (Crab-eating macaque)).